We begin with the raw amino-acid sequence, 91 residues long: uncharacterized protein (91 aa).

This is an uncharacterized protein from Homo sapiens (Human).